The sequence spans 360 residues: Phospho-N-acetylmuramoyl-pentapeptide-transferase (360 aa).

Residues 1–25 (MLVWLAEHLVKYYSGFNVFSYLTFR) are Periplasmic-facing. The helical transmembrane segment at 26-46 (AIVSLLTALFISLWMGPRMIA) threads the bilayer. Residues 47-71 (RLQKLSFGQVVRNDGPESHFSKRGT) are Cytoplasmic-facing. A helical transmembrane segment spans residues 72–92 (PTMGGIMILTAIVISVLLWAY). A topological domain (periplasmic) is located at residue P93. The chain crosses the membrane as a helical span at residues 94–114 (SNPYVWCVLVVLIGYGIIGFV). Over 115 to 131 (DDYRKVVRKDTKGLIAR) the chain is Cytoplasmic. The helical transmembrane segment at 132 to 152 (WKYFWMSVIALGVAFALYLVG) threads the bilayer. Residues 153–167 (KDTPVTQLVVPFFKD) lie on the Periplasmic side of the membrane. A helical transmembrane segment spans residues 168-188 (VMPQLGLFYILLSYFVIVGTG). At 189–198 (NAVNLTDGLD) the chain is on the cytoplasmic side. Residues 199–219 (GLAIMPTVFVAAGFALVAWAT) form a helical membrane-spanning segment. The Periplasmic segment spans residues 220–235 (GNMNFANYLHIPYLRH). A helical membrane pass occupies residues 236 to 256 (AGELVIVCTAIVGAGLGFLWF). The Cytoplasmic portion of the chain corresponds to 257–262 (NTYPAQ). A helical transmembrane segment spans residues 263–283 (VFMGDVGSLALGGALGIIAVL). Topologically, residues 284-287 (LRQE) are periplasmic. A helical transmembrane segment spans residues 288-308 (FLLVIMGGVFVVETLSVILQV). At 309–337 (GSFKLRGQRIFRMAPIHHHYELKGWPEPR) the chain is on the cytoplasmic side. The chain crosses the membrane as a helical span at residues 338-358 (VIVRFWIISLMLVLIGLATLK). Residues 359 to 360 (VR) are Periplasmic-facing.

The protein belongs to the glycosyltransferase 4 family. MraY subfamily. Mg(2+) serves as cofactor.

It localises to the cell inner membrane. It catalyses the reaction UDP-N-acetyl-alpha-D-muramoyl-L-alanyl-gamma-D-glutamyl-meso-2,6-diaminopimeloyl-D-alanyl-D-alanine + di-trans,octa-cis-undecaprenyl phosphate = di-trans,octa-cis-undecaprenyl diphospho-N-acetyl-alpha-D-muramoyl-L-alanyl-D-glutamyl-meso-2,6-diaminopimeloyl-D-alanyl-D-alanine + UMP. Its pathway is cell wall biogenesis; peptidoglycan biosynthesis. Functionally, catalyzes the initial step of the lipid cycle reactions in the biosynthesis of the cell wall peptidoglycan: transfers peptidoglycan precursor phospho-MurNAc-pentapeptide from UDP-MurNAc-pentapeptide onto the lipid carrier undecaprenyl phosphate, yielding undecaprenyl-pyrophosphoryl-MurNAc-pentapeptide, known as lipid I. The sequence is that of Phospho-N-acetylmuramoyl-pentapeptide-transferase from Salmonella paratyphi C (strain RKS4594).